Reading from the N-terminus, the 427-residue chain is Histidinol dehydrogenase (427 aa).

Residues Tyr-123, Gln-185, and Asn-208 each coordinate NAD(+). Substrate is bound by residues Ser-231, Gln-253, and His-256. Zn(2+) is bound by residues Gln-253 and His-256. Active-site proton acceptor residues include Glu-321 and His-322. The substrate site is built by His-322, Asp-355, Glu-409, and His-414. A Zn(2+)-binding site is contributed by Asp-355. His-414 contributes to the Zn(2+) binding site.

It belongs to the histidinol dehydrogenase family. Requires Zn(2+) as cofactor.

It catalyses the reaction L-histidinol + 2 NAD(+) + H2O = L-histidine + 2 NADH + 3 H(+). It functions in the pathway amino-acid biosynthesis; L-histidine biosynthesis; L-histidine from 5-phospho-alpha-D-ribose 1-diphosphate: step 9/9. Its function is as follows. Catalyzes the sequential NAD-dependent oxidations of L-histidinol to L-histidinaldehyde and then to L-histidine. This is Histidinol dehydrogenase (hisD) from Bacillus subtilis (strain 168).